Reading from the N-terminus, the 62-residue chain is Calmodulin regulator protein PCP4 (62 aa).

The tract at residues 1-39 (MSERQGAGATNGKDKTSGENDGQKKVQEEFDIDMDAPET) is disordered. Residues 12–28 (GKDKTSGENDGQKKVQE) are compositionally biased toward basic and acidic residues. An acidic; binds calcium and is required for modulating the calcium-binding kinetics of calmodulin region spans residues 28-40 (EEFDIDMDAPETE). The 24-residue stretch at 39–62 (TERAAVAIQSQFRKFQKKKAGSQS) folds into the IQ domain.

The protein belongs to the PCP4 family. As to quaternary structure, binds to both calcium-free and calcium-bound calmodulin. The affinity for the calcium-bound form is 50-fold greater.

Functionally, functions as a modulator of calcium-binding by calmodulin. Thereby, regulates calmodulin activity and the different processes it controls. For instance, may play a role in neuronal differentiation through activation of calmodulin-dependent kinase signaling pathways. The chain is Calmodulin regulator protein PCP4 from Homo sapiens (Human).